The primary structure comprises 98 residues: Acylphosphatase (98 aa).

The region spanning 12–98 (TYYVRVRGVV…DKRFERFQQH (87 aa)) is the Acylphosphatase-like domain. Catalysis depends on residues Arg27 and Asn45.

The protein belongs to the acylphosphatase family.

It carries out the reaction an acyl phosphate + H2O = a carboxylate + phosphate + H(+). The sequence is that of Acylphosphatase (acyP) from Burkholderia mallei (strain NCTC 10247).